The primary structure comprises 321 residues: Probable heme-iron transport system permease protein IsdF (321 aa).

Helical transmembrane passes span 9-29, 61-81, 89-109, 114-134, 143-163, 179-199, 233-253, 267-287, and 294-314; these read LLFL…FVTG, ILIA…LQAA, ANII…MLFI, FYLP…IILL, VSMI…LEIL, IWSD…LTLL, VFLA…GIIV, LIPF…LLGR, and EIPA…YLIC.

Belongs to the binding-protein-dependent transport system permease family. FecCD subfamily.

It localises to the cell membrane. Its function is as follows. Part of the binding-protein-dependent transport system for heme-iron. Responsible for the translocation of the substrate across the membrane. The protein is Probable heme-iron transport system permease protein IsdF (isdF) of Staphylococcus aureus (strain NCTC 8325 / PS 47).